The sequence spans 367 residues: Uroporphyrinogen decarboxylase (367 aa).

Residues 27–31 (RQAGR), D77, Y157, T212, and H333 each bind substrate.

Belongs to the uroporphyrinogen decarboxylase family. In terms of assembly, homodimer.

The protein resides in the cytoplasm. It carries out the reaction uroporphyrinogen III + 4 H(+) = coproporphyrinogen III + 4 CO2. It functions in the pathway porphyrin-containing compound metabolism; protoporphyrin-IX biosynthesis; coproporphyrinogen-III from 5-aminolevulinate: step 4/4. In terms of biological role, catalyzes the decarboxylation of four acetate groups of uroporphyrinogen-III to yield coproporphyrinogen-III. This Cupriavidus metallidurans (strain ATCC 43123 / DSM 2839 / NBRC 102507 / CH34) (Ralstonia metallidurans) protein is Uroporphyrinogen decarboxylase.